We begin with the raw amino-acid sequence, 104 residues long: Thiosulfate sulfurtransferase PspE (104 aa).

A signal peptide spans 1–19 (MFKKGLLALALVFSLPVFA). A Rhodanese domain is found at 20-104 (AEHWIDVRVP…KDIAMPKVKG (85 aa)). Cysteine 67 functions as the Cysteine persulfide intermediate in the catalytic mechanism.

As to quaternary structure, monomer.

It is found in the periplasm. The enzyme catalyses thiosulfate + hydrogen cyanide = thiocyanate + sulfite + 2 H(+). Its activity is regulated as follows. Inhibited by thiosulfate above 100 mM, particularly at low cyanide concentrations (&lt;5 mM). Inhibited by sodium sulfate or sodium chloride at 0.25 M which gives around 50% inhibition of rhodanese activity. Addition of sodium phosphate at the same concentration results in about 65% inhibition. Sulfite strongly inhibits PspE activity (1 mM sodium sulfite resulted in more than 50% inhibition of rhodanese activity). Its function is as follows. The phage shock protein (psp) operon (pspABCDE) may play a significant role in the competition for survival under nutrient- or energy-limited conditions. PspE catalyzes the sulfur-transfer reaction from thiosulfate to cyanide, to form sulfite and thiocyanate. Also able to use dithiol (dithiothreitol) as an alternate sulfur acceptor. Also possesses a very low mercaptopyruvate sulfurtransferase activity. This chain is Thiosulfate sulfurtransferase PspE (pspE), found in Escherichia coli (strain K12).